Consider the following 503-residue polypeptide: WD repeat-containing protein 55 homolog (503 aa).

The segment at 1–131 is disordered; that stretch reads MHTHNNFKTP…DSAAFDLDDL (131 aa). Acidic residues-rich tracts occupy residues 12–23 and 37–56; these read DADELDDLDDDM and VGED…DMEA. Polar residues predominate over residues 59-76; sequence PNQNADENESISSDSSFD. Residues 78–96 show a composition bias toward acidic residues; the sequence is NAEDSSDSDDSMLEEDEAE. WD repeat units follow at residues 157 to 196, 201 to 242, 244 to 282, 285 to 324, 327 to 366, and 411 to 450; these read KLED…NKLL, VHSK…KLYE, AHDD…PIFE, EVED…LYVQ, PYEE…YHCD, and QHNM…DFGD. Residues 483–503 are disordered; it reads TKEDEDNADNNDAAAGPSNSA.

This sequence belongs to the WD repeat WDR55 family.

In Drosophila pseudoobscura pseudoobscura (Fruit fly), this protein is WD repeat-containing protein 55 homolog.